The primary structure comprises 257 residues: Putative cysteine-rich repeat secretory protein 28 (257 aa).

The signal sequence occupies residues 1-26; that stretch reads MFSTFGSVPILTVVAIQLFLIRNVLS. 2 Gnk2-homologous domains span residues 32–136 and 142–254; these read AYLH…TVDS and YEND…LYPF.

Belongs to the cysteine-rich repeat secretory protein family.

The protein resides in the secreted. In Arabidopsis thaliana (Mouse-ear cress), this protein is Putative cysteine-rich repeat secretory protein 28 (CRRSP28).